The chain runs to 158 residues: 18.1 kDa class I heat shock protein (158 aa).

Residues E44–G158 enclose the sHSP domain.

Belongs to the small heat shock protein (HSP20) family. Forms oligomeric structures.

The protein resides in the cytoplasm. The sequence is that of 18.1 kDa class I heat shock protein (HSP18.1) from Pisum sativum (Garden pea).